Here is a 475-residue protein sequence, read N- to C-terminus: MESKALLLLALAVWLQSLTASRGGVAAADQRRDFIDIESKFALRTPEDTAEDTCHLIPGVAESVATCHFNHSSKTFMVIHGWTVTGMYESWVPKLVAALYKREPDSNVIVVDWLSRAQQHYPVSAGYTKLVGQDVARFINWMEEEFNYPLDNVHLLGYSLGAHAAGIAGSLTNKKVNRITGLDPAGPNFEYAEAPSRLSPDDADFVDVLHTFTRGSPGRSIGIQKPVGHVDIYPNGGTFQPGCNIGEAIRVIAERGLGDVDQLVKCSHERSIHLFIDSLLNEENPSKAYRCSSKEAFEKGLCLSCRKNRCNNLGYEINKVRAKRSSKMYLKTRSQMPYKVFHYQVKIHFSGTESETHTNQAFEISLYGTVAESENIPFTLPEVSTNKTYSFLIYTEVDIGELLMLKLKWKSDSYFSWSDWWSSPGFAIQKIRVKAGETQKKVIFCSREKVSHLQKGKAPAVFVKCHDKSLNKKSG.

The signal sequence occupies residues 1–27; sequence MESKALLLLALAVWLQSLTASRGGVAA. An interaction with GPIHBP1 region spans residues 32-53; it reads RDFIDIESKFALRTPEDTAEDT. An intrachain disulfide couples Cys54 to Cys67. N-linked (GlcNAc...) asparagine glycosylation is present at Asn70. Residue Tyr121 is modified to 3'-nitrotyrosine. Ser159 functions as the Nucleophile in the catalytic mechanism. Catalysis depends on Asp183, which acts as the Charge relay system. 3'-nitrotyrosine is present on Tyr191. Positions 194, 197, 199, and 202 each coordinate Ca(2+). Cys243 and Cys266 are oxidised to a cystine. Positions 243–266 are essential for determining substrate specificity; sequence CNIGEAIRVIAERGLGDVDQLVKC. The Charge relay system role is filled by His268. Cystine bridges form between Cys291-Cys310 and Cys302-Cys305. The region spanning 341-464 is the PLAT domain; sequence FHYQVKIHFS…KGKAPAVFVK (124 aa). A 3'-nitrotyrosine modification is found at Tyr343. A glycan (N-linked (GlcNAc...) asparagine) is linked at Asn386. The important for interaction with lipoprotein particles stretch occupies residues 417-421; that stretch reads WSDWW. The tract at residues 430 to 434 is important for heparin binding; that stretch reads KIRVK. The segment at 443-467 is interaction with GPIHBP1; it reads IFCSREKVSHLQKGKAPAVFVKCHD. Cys445 and Cys465 form a disulfide bridge.

It belongs to the AB hydrolase superfamily. Lipase family. As to quaternary structure, homodimer. Interacts with GPIHBP1 with 1:1 stoichiometry. Interacts with APOC2; the interaction activates LPL activity in the presence of lipids. Interaction with heparan sulfate proteoglycans is required to protect LPL against loss of activity. Associates with lipoprotein particles in blood plasma. Interacts with LMF1 and SEL1L; interaction with SEL1L is required to prevent aggregation of newly synthesized LPL in the endoplasmic reticulum (ER), and for normal export of LPL from the ER to the extracellular space. Interacts with SORL1; SORL1 acts as a sorting receptor, promoting LPL localization to endosomes and later to lysosomes, leading to degradation of newly synthesized LPL. In terms of processing, tyrosine nitration after lipopolysaccharide (LPS) challenge down-regulates the lipase activity. Highest levels in the spinal cord.

The protein resides in the cell membrane. Its subcellular location is the secreted. It localises to the extracellular space. The protein localises to the extracellular matrix. The enzyme catalyses a triacylglycerol + H2O = a diacylglycerol + a fatty acid + H(+). It catalyses the reaction a 1,2-diacyl-sn-glycero-3-phosphocholine + H2O = a 2-acyl-sn-glycero-3-phosphocholine + a fatty acid + H(+). The catalysed reaction is 1,2,3-tri-(9Z-octadecenoyl)-glycerol + H2O = di-(9Z)-octadecenoylglycerol + (9Z)-octadecenoate + H(+). It carries out the reaction 1,2-di-(9Z-octadecenoyl)-sn-glycero-3-phosphocholine + H2O = (9Z-octadecenoyl)-sn-glycero-3-phosphocholine + (9Z)-octadecenoate + H(+). The enzyme catalyses 1,2,3-tributanoylglycerol + H2O = dibutanoylglycerol + butanoate + H(+). It catalyses the reaction 1,2-dihexadecanoyl-sn-glycero-3-phosphocholine + H2O = hexadecanoyl-sn-glycero-3-phosphocholine + hexadecanoate + H(+). Its activity is regulated as follows. The apolipoprotein APOC2 acts as a coactivator of LPL activity. Ca(2+) binding promotes protein stability and formation of the active homodimer. Interaction with GPIHBP1 protects LPL against inactivation by ANGPTL4. In terms of biological role, key enzyme in triglyceride metabolism. Catalyzes the hydrolysis of triglycerides from circulating chylomicrons and very low density lipoproteins (VLDL), and thereby plays an important role in lipid clearance from the blood stream, lipid utilization and storage. Although it has both phospholipase and triglyceride lipase activities it is primarily a triglyceride lipase with low but detectable phospholipase activity. Mediates margination of triglyceride-rich lipoprotein particles in capillaries. Recruited to its site of action on the luminal surface of vascular endothelium by binding to GPIHBP1 and cell surface heparan sulfate proteoglycans. This chain is Lipoprotein lipase (LPL), found in Papio anubis (Olive baboon).